A 600-amino-acid chain; its full sequence is Glutamine--fructose-6-phosphate aminotransferase [isomerizing] (600 aa).

The active-site Nucleophile; for GATase activity is Cys2. The Glutamine amidotransferase type-2 domain occupies 2 to 217 (CGIVGYIGQN…DKEIVLVSRN (216 aa)). 2 SIS domains span residues 283-422 (IRTA…VKGL) and 452-590 (LARD…VDKP). Lys595 acts as the For Fru-6P isomerization activity in catalysis.

In terms of assembly, homodimer.

The protein resides in the cytoplasm. The catalysed reaction is D-fructose 6-phosphate + L-glutamine = D-glucosamine 6-phosphate + L-glutamate. Catalyzes the first step in hexosamine metabolism, converting fructose-6P into glucosamine-6P using glutamine as a nitrogen source. The polypeptide is Glutamine--fructose-6-phosphate aminotransferase [isomerizing] (Oceanobacillus iheyensis (strain DSM 14371 / CIP 107618 / JCM 11309 / KCTC 3954 / HTE831)).